A 97-amino-acid polypeptide reads, in one-letter code: Putative pterin-4-alpha-carbinolamine dehydratase (97 aa).

The protein belongs to the pterin-4-alpha-carbinolamine dehydratase family.

The enzyme catalyses (4aS,6R)-4a-hydroxy-L-erythro-5,6,7,8-tetrahydrobiopterin = (6R)-L-erythro-6,7-dihydrobiopterin + H2O. The chain is Putative pterin-4-alpha-carbinolamine dehydratase from Dinoroseobacter shibae (strain DSM 16493 / NCIMB 14021 / DFL 12).